The following is a 477-amino-acid chain: Aspartyl/glutamyl-tRNA(Asn/Gln) amidotransferase subunit B (477 aa).

The protein belongs to the GatB/GatE family. GatB subfamily. Heterotrimer of A, B and C subunits.

The catalysed reaction is L-glutamyl-tRNA(Gln) + L-glutamine + ATP + H2O = L-glutaminyl-tRNA(Gln) + L-glutamate + ADP + phosphate + H(+). The enzyme catalyses L-aspartyl-tRNA(Asn) + L-glutamine + ATP + H2O = L-asparaginyl-tRNA(Asn) + L-glutamate + ADP + phosphate + 2 H(+). Functionally, allows the formation of correctly charged Asn-tRNA(Asn) or Gln-tRNA(Gln) through the transamidation of misacylated Asp-tRNA(Asn) or Glu-tRNA(Gln) in organisms which lack either or both of asparaginyl-tRNA or glutaminyl-tRNA synthetases. The reaction takes place in the presence of glutamine and ATP through an activated phospho-Asp-tRNA(Asn) or phospho-Glu-tRNA(Gln). This is Aspartyl/glutamyl-tRNA(Asn/Gln) amidotransferase subunit B from Legionella pneumophila (strain Lens).